Here is a 74-residue protein sequence, read N- to C-terminus: Cytochrome c oxidase subunit 6C (74 aa).

Residues serine 2–glycine 12 are Mitochondrial matrix-facing. The helical transmembrane segment at leucine 13 to arginine 53 threads the bilayer. The Mitochondrial intermembrane portion of the chain corresponds to asparagine 54–lysine 74.

It belongs to the cytochrome c oxidase subunit 6c family. In terms of assembly, component of the cytochrome c oxidase (complex IV, CIV), a multisubunit enzyme composed of 14 subunits. The complex is composed of a catalytic core of 3 subunits MT-CO1, MT-CO2 and MT-CO3, encoded in the mitochondrial DNA, and 11 supernumerary subunits COX4I1 (or COX4I2), COX5A, COX5B, COX6A2 (or COX6A1), COX6B1 (or COX6B2), COX6C, COX7A1 (or COX7A2), COX7B, COX7C, COX8B and NDUFA4, which are encoded in the nuclear genome. The complex exists as a monomer or a dimer and forms supercomplexes (SCs) in the inner mitochondrial membrane with NADH-ubiquinone oxidoreductase (complex I, CI) and ubiquinol-cytochrome c oxidoreductase (cytochrome b-c1 complex, complex III, CIII), resulting in different assemblies (supercomplex SCI(1)III(2)IV(1) and megacomplex MCI(2)III(2)IV(2)).

Its subcellular location is the mitochondrion inner membrane. The protein operates within energy metabolism; oxidative phosphorylation. Functionally, component of the cytochrome c oxidase, the last enzyme in the mitochondrial electron transport chain which drives oxidative phosphorylation. The respiratory chain contains 3 multisubunit complexes succinate dehydrogenase (complex II, CII), ubiquinol-cytochrome c oxidoreductase (cytochrome b-c1 complex, complex III, CIII) and cytochrome c oxidase (complex IV, CIV), that cooperate to transfer electrons derived from NADH and succinate to molecular oxygen, creating an electrochemical gradient over the inner membrane that drives transmembrane transport and the ATP synthase. Cytochrome c oxidase is the component of the respiratory chain that catalyzes the reduction of oxygen to water. Electrons originating from reduced cytochrome c in the intermembrane space (IMS) are transferred via the dinuclear copper A center (CU(A)) of subunit 2 and heme A of subunit 1 to the active site in subunit 1, a binuclear center (BNC) formed by heme A3 and copper B (CU(B)). The BNC reduces molecular oxygen to 2 water molecules using 4 electrons from cytochrome c in the IMS and 4 protons from the mitochondrial matrix. This Bos taurus (Bovine) protein is Cytochrome c oxidase subunit 6C (COX6C).